Consider the following 152-residue polypeptide: SKP1-like protein 10 (152 aa).

The segment at 94–152 (IMAANYLNIKSLLDLACQTVADMIKDNTVEHTRKFFNIENDYTHEEEEAVRRENQWGFE) is interaction with the F-box domain of F-box proteins.

This sequence belongs to the SKP1 family. Part of a SCF (SKP1-cullin-F-box) protein ligase complex. Interacts with CPR1/CPR30. As to expression, expressed in young seedlings, roots, leaves, floral stems, inflorescences, and siliques.

The protein localises to the nucleus. It functions in the pathway protein modification; protein ubiquitination. Its function is as follows. Involved in ubiquitination and subsequent proteasomal degradation of target proteins. Together with CUL1, RBX1 and a F-box protein, it forms a SCF E3 ubiquitin ligase complex. The functional specificity of this complex depends on the type of F-box protein. In the SCF complex, it serves as an adapter that links the F-box protein to CUL1. This Arabidopsis thaliana (Mouse-ear cress) protein is SKP1-like protein 10 (ASK10).